Consider the following 245-residue polypeptide: Probable transcriptional regulatory protein MAG6590 (245 aa).

This sequence belongs to the TACO1 family.

The protein localises to the cytoplasm. The protein is Probable transcriptional regulatory protein MAG6590 of Mycoplasmopsis agalactiae (strain NCTC 10123 / CIP 59.7 / PG2) (Mycoplasma agalactiae).